The primary structure comprises 158 residues: MAAQGVGPGPGSAAPPGLEAARQKLALRRKKVLSTEEMELYELAQAAGGAIDPDVFKILVDLLKLNVAPLAVFQMLKSMCAGQRLASEPQDPAAVSLPTSSVPETRGRNKGSAALGGALALAERSSREGSSQRMPRQPSATRLPKGGGPGKSPTRGST.

At Ser-34 the chain carries Phosphoserine. Residues 84–158 (RLASEPQDPA…PGKSPTRGST (75 aa)) are disordered. Low complexity predominate over residues 111–122 (GSAALGGALALA). Polar residues predominate over residues 128-140 (EGSSQRMPRQPSA). Ser-152 carries the phosphoserine modification.

This sequence belongs to the MOZART2 family. As to quaternary structure, associates with the gamma-tubulin ring complex (gTuRC) consisting of TUBGCP2, TUBGCP3, TUBGCP4, TUBGCP5 and TUBGCP6 and gamma-tubulin TUBG1 or TUBG2; within the complex, interacts with TUBGCP2; the interaction plays a role in gTuRC activation. Interacts with TUBG1.

It is found in the cytoplasm. It localises to the cytoskeleton. The protein resides in the microtubule organizing center. The protein localises to the centrosome. Its subcellular location is the spindle. Required for the recruitment and the assembly of the gamma-tubulin ring complex (gTuRC) at the centrosome. The gTuRC regulates the minus-end nucleation of alpha-beta tubulin heterodimers that grow into microtubule protafilaments, a critical step in centrosome duplication and spindle formation. This is Mitotic-spindle organizing protein 2B (MZT2B) from Homo sapiens (Human).